The primary structure comprises 462 residues: Elongation factor 1-alpha (462 aa).

Position 2 is a n,N,N-trimethylglycine (glycine 2). Residue lysine 3 is modified to N6,N6-dimethyllysine; alternate. Lysine 3 carries the post-translational modification N6-methyllysine; alternate. A tr-type G domain is found at 5–242 (KAHVNVVVIG…DAIEPPVRPS (238 aa)). Residues 14–21 (GHVDSGKS) are G1. 14–21 (GHVDSGKS) serves as a coordination point for GTP. Lysine 30 carries the post-translational modification N6-methyllysine. The interval 70–74 (GITID) is G2. An N6,N6,N6-trimethyllysine modification is found at lysine 79. The G3 stretch occupies residues 91–94 (DAPG). GTP-binding positions include 91 to 95 (DAPGH) and 153 to 156 (NKMD). Positions 153–156 (NKMD) are G4. The G5 stretch occupies residues 192–194 (SGW). N6,N6-dimethyllysine; alternate is present on lysine 318. At lysine 318 the chain carries N6-methyllysine; alternate. Lysine 392 is subject to N6-methyllysine.

The protein belongs to the TRAFAC class translation factor GTPase superfamily. Classic translation factor GTPase family. EF-Tu/EF-1A subfamily.

The protein resides in the cytoplasm. Functionally, this protein promotes the GTP-dependent binding of aminoacyl-tRNA to the A-site of ribosomes during protein biosynthesis. The chain is Elongation factor 1-alpha (TEF1) from Serendipita indica (Root endophyte fungus).